The following is a 318-amino-acid chain: Methionyl-tRNA formyltransferase (318 aa).

A (6S)-5,6,7,8-tetrahydrofolate-binding site is contributed by 112–115 (SILP).

This sequence belongs to the Fmt family.

It carries out the reaction L-methionyl-tRNA(fMet) + (6R)-10-formyltetrahydrofolate = N-formyl-L-methionyl-tRNA(fMet) + (6S)-5,6,7,8-tetrahydrofolate + H(+). Its function is as follows. Attaches a formyl group to the free amino group of methionyl-tRNA(fMet). The formyl group appears to play a dual role in the initiator identity of N-formylmethionyl-tRNA by promoting its recognition by IF2 and preventing the misappropriation of this tRNA by the elongation apparatus. The sequence is that of Methionyl-tRNA formyltransferase from Shewanella sp. (strain MR-4).